Consider the following 301-residue polypeptide: uncharacterized protein (301 aa).

Active-site charge relay system residues include Ser44 and Tyr107. Catalysis depends on Tyr133, which acts as the Proton donor. Lys162 functions as the Schiff-base intermediate with substrate in the catalytic mechanism.

Belongs to the DapA family. In terms of assembly, homotetramer.

Its subcellular location is the cytoplasm. This is an uncharacterized protein from Pyrobaculum neutrophilum (strain DSM 2338 / JCM 9278 / NBRC 100436 / V24Sta) (Thermoproteus neutrophilus).